The primary structure comprises 487 residues: GTPase Der (487 aa).

Residues 2–166 (LKIAILGRPN…RIKLVANLPE (165 aa)) enclose the EngA-type G 1 domain. GTP-binding positions include 8–15 (GRPNVGKS), 55–59 (DTGGV), and 118–121 (NKAD). The disordered stretch occupies residues 165–194 (PEPREEEEEGLEELSVDEHEESEAALPSNT). Over residues 168 to 187 (REEEEEGLEELSVDEHEESE) the composition is skewed to acidic residues. An EngA-type G 2 domain is found at 225 to 398 (LKIALIGRPN…AIDELHHVVS (174 aa)). Residues 231-238 (GRPNVGKS), 278-282 (DTAGL), and 343-346 (NKWD) each bind GTP. In terms of domain architecture, KH-like spans 399–483 (NKVPTPIVNK…PFDLEFKEKP (85 aa)).

This sequence belongs to the TRAFAC class TrmE-Era-EngA-EngB-Septin-like GTPase superfamily. EngA (Der) GTPase family. Associates with the 50S ribosomal subunit.

Its function is as follows. GTPase that plays an essential role in the late steps of ribosome biogenesis. This Chlamydia pneumoniae (Chlamydophila pneumoniae) protein is GTPase Der.